The following is a 240-amino-acid chain: Putative outer membrane protein RT0057 (240 aa).

The signal sequence occupies residues M1–A20.

The protein belongs to the OmpW/AlkL family.

The protein localises to the cell outer membrane. This Rickettsia typhi (strain ATCC VR-144 / Wilmington) protein is Putative outer membrane protein RT0057.